Reading from the N-terminus, the 259-residue chain is Phosphate import ATP-binding protein PstB (259 aa).

The ABC transporter domain occupies 5-248 (IDVSGLHVYY…NKIFTKPEKK (244 aa)). An ATP-binding site is contributed by 37 to 44 (GSSGCGKS).

It belongs to the ABC transporter superfamily. Phosphate importer (TC 3.A.1.7) family. The complex is composed of two ATP-binding proteins (PstB), two transmembrane proteins (PstC and PstA) and a solute-binding protein (PstS).

It localises to the cell membrane. The enzyme catalyses phosphate(out) + ATP + H2O = ADP + 2 phosphate(in) + H(+). In terms of biological role, part of the ABC transporter complex PstSACB involved in phosphate import. Responsible for energy coupling to the transport system. The protein is Phosphate import ATP-binding protein PstB of Thermobifida fusca (strain YX).